The chain runs to 376 residues: Alpha-2,8-sialyltransferase 8E (376 aa).

The Cytoplasmic portion of the chain corresponds to 1–17 (MRYADPSANRDLLGNRT). Residues 18 to 38 (LLFIFICAFALVTLLQQILYG) form a helical; Signal-anchor for type II membrane protein membrane-spanning segment. The Lumenal portion of the chain corresponds to 39–376 (RNYIKRYFEF…RVHTGTCSCC (338 aa)). N-linked (GlcNAc...) asparagine glycosylation is found at Asn56 and Asn96. 2 cysteine pairs are disulfide-bonded: Cys164–Cys313 and Cys178–Cys373. Substrate-binding positions include Asn192 and 214-216 (NPS). N-linked (GlcNAc...) asparagine glycans are attached at residues Asn241 and Asn284. 300 to 302 (STG) is a substrate binding site. His348 (proton donor/acceptor) is an active-site residue.

It belongs to the glycosyltransferase 29 family.

Its subcellular location is the golgi apparatus membrane. It catalyses the reaction a ganglioside GQ1c (d18:1(4E)) + CMP-N-acetyl-beta-neuraminate = a ganglioside GP1c (d18:1(4E)) + CMP + H(+). It functions in the pathway protein modification; protein glycosylation. In terms of biological role, involved in the synthesis of gangliosides GD1c, GT1a, GQ1b, GP1c and GT3 from GD1a, GT1b, GM1b and GD3 respectively. The sequence is that of Alpha-2,8-sialyltransferase 8E (ST8SIA5) from Pan troglodytes (Chimpanzee).